The following is a 298-amino-acid chain: GTPase Era (298 aa).

The 168-residue stretch at 3–170 (KSGFVTIVGR…VELMKKAMPE (168 aa)) folds into the Era-type G domain. The segment at 11–18 (GRPNVGKS) is G1. 11–18 (GRPNVGKS) serves as a coordination point for GTP. Positions 37–41 (QTTRN) are G2. Residues 58–61 (DTPG) are G3. GTP-binding positions include 58-62 (DTPGI) and 120-123 (NKVD). The tract at residues 120–123 (NKVD) is G4. The interval 149-151 (ISA) is G5. A KH type-2 domain is found at 201–278 (LRDEVPHGIA…NLKIWVKVRK (78 aa)).

The protein belongs to the TRAFAC class TrmE-Era-EngA-EngB-Septin-like GTPase superfamily. Era GTPase family. As to quaternary structure, monomer.

It is found in the cytoplasm. Its subcellular location is the cell membrane. Its function is as follows. An essential GTPase that binds both GDP and GTP, with rapid nucleotide exchange. Plays a role in 16S rRNA processing and 30S ribosomal subunit biogenesis and possibly also in cell cycle regulation and energy metabolism. This is GTPase Era from Clostridium beijerinckii (strain ATCC 51743 / NCIMB 8052) (Clostridium acetobutylicum).